Reading from the N-terminus, the 339-residue chain is D-erythrose-4-phosphate dehydrogenase (339 aa).

Residues arginine 12–isoleucine 13 and arginine 81 contribute to the NAD(+) site. Residues serine 154–threonine 156, arginine 200, threonine 213–lysine 214, and arginine 236 each bind substrate. Catalysis depends on cysteine 155, which acts as the Nucleophile. Asparagine 318 is an NAD(+) binding site.

In terms of assembly, homotetramer.

It localises to the cytoplasm. The catalysed reaction is D-erythrose 4-phosphate + NAD(+) + H2O = 4-phospho-D-erythronate + NADH + 2 H(+). The protein operates within cofactor biosynthesis; pyridoxine 5'-phosphate biosynthesis; pyridoxine 5'-phosphate from D-erythrose 4-phosphate: step 1/5. Functionally, catalyzes the NAD-dependent conversion of D-erythrose 4-phosphate to 4-phosphoerythronate. This Escherichia coli (strain K12) protein is D-erythrose-4-phosphate dehydrogenase (epd).